The chain runs to 413 residues: Corticotropin-releasing factor receptor 2 (413 aa).

A signal peptide (not cleaved) is located at residues 1–22 (MDSTIFEIIIDEFDANCSLLDA). Residues 1–110 (MDSTIFEIII…CVPILDNKRK (110 aa)) lie on the Extracellular side of the membrane. N-linked (GlcNAc...) asparagine glycosylation is present at Asn-16. Cystine bridges form between Cys-17–Cys-53, Cys-43–Cys-86, and Cys-67–Cys-101. N-linked (GlcNAc...) asparagine glycans are attached at residues Asn-77, Asn-89, and Asn-97. Residues 111-141 (YALHYKIALIINYLGHCISILALVIAFLLFL) form a helical membrane-spanning segment. Residues 142-148 (CLRSIRC) are Cytoplasmic-facing. A helical membrane pass occupies residues 149 to 173 (LRNIIHWNLITTFILRNIMWFLLQM). Over 174–187 (IDHNIHESNEVWCR) the chain is Extracellular. A disulfide bridge connects residues Cys-186 and Cys-256. The chain crosses the membrane as a helical span at residues 188–216 (CITTIYNYFVVTNFFWMFVEGCYLHTAIV). Residues 217–223 (MTYSTDK) are Cytoplasmic-facing. The helical transmembrane segment at 224–251 (LRKWVFLFIGWCIPSPIIVTWAICKLFY) threads the bilayer. Residues 252-267 (ENEQCWIGKEPGKYID) lie on the Extracellular side of the membrane. Residues 268 to 293 (YIYQGRVILVLLINFVFLFNIVRILM) form a helical membrane-spanning segment. Over 294–304 (TKLRASTTSET) the chain is Cytoplasmic. The helical transmembrane segment at 305–329 (IQYRKAVKATLVLLPLLGITYMLFF) threads the bilayer. The Extracellular portion of the chain corresponds to 330–336 (VNPGEDD). A helical transmembrane segment spans residues 337–366 (VSQIVFIYFNSFLQSFQGFFVSVFYCFLNG). Residues 367–413 (EVRSAARKRWHRWQDHHSLRVRVARAMSIPTSPTRISFHSIKQTAAV) are Cytoplasmic-facing.

It belongs to the G-protein coupled receptor 2 family. In terms of processing, a N-glycosylation site within the signal peptide impedes its proper cleavage and function.

Its subcellular location is the cell membrane. Its function is as follows. G-protein coupled receptor for CRH (corticotropin-releasing factor), UCN (urocortin), UCN2 and UCN3. Has high affinity for UCN. Ligand binding causes a conformation change that triggers signaling via guanine nucleotide-binding proteins (G proteins) and down-stream effectors, such as adenylate cyclase. Promotes the activation of adenylate cyclase, leading to increased intracellular cAMP levels. This chain is Corticotropin-releasing factor receptor 2 (crhr2), found in Xenopus laevis (African clawed frog).